Reading from the N-terminus, the 492-residue chain is Transcript termination protein OPG145 (492 aa).

The Helicase ATP-binding domain maps to 100 to 256 (MIELKRPLYI…NSIINIAKLS (157 aa)). 113–120 (LACGFGKT) serves as a coordination point for ATP. The DEAH box motif lies at 206-209 (DESH).

It belongs to the helicase family. Poxviruses subfamily. As to quaternary structure, interacts with OPG087. Might be part of a transcription complex composed at least of OPG087, OPG110, and OPG145.

Its subcellular location is the virion. Its function is as follows. DNA helicase which seems to act as a postreplicative transcription termination factor. Involved in ATP-dependent release of nascent RNA. Forms a stable complex with single-stranded DNA, and to a lesser extent RNA. The sequence is that of Transcript termination protein OPG145 (OPG145) from Cynomys gunnisoni (Gunnison's prairie dog).